A 4579-amino-acid polypeptide reads, in one-letter code: Sacsin (4579 aa).

Residues 9 to 84 (VPVTVLPGCV…FVNLQSKGLK (76 aa)) enclose the Ubiquitin-like domain. Lysine 943 carries the post-translational modification N6-acetyllysine. Phosphoserine occurs at positions 1779 and 2511. Threonine 2516 carries the post-translational modification Phosphothreonine. Serine 3435 carries the post-translational modification Phosphoserine. 2 disordered regions span residues 4248-4273 (PEES…TPGL) and 4279-4298 (LFSG…PKKL). Residues 4254 to 4267 (SRDSAPSTPTSPTE) are compositionally biased toward polar residues. Threonine 4261 is subject to Phosphothreonine. Serine 4264 carries the post-translational modification Phosphoserine. Basic residues predominate over residues 4288–4298 (TSSKHQSPKKL). One can recognise a J domain in the interval 4306–4393 (ILKEVTSVVE…ASRFQSDKYS (88 aa)). The interval 4405–4427 (ATSHKSERQQQNKEKCPPSAGQT) is disordered. Positions 4406-4420 (TSHKSERQQQNKEKC) are enriched in basic and acidic residues. The HEPN domain maps to 4451–4567 (LRQARANFSA…MRVMECTACI (117 aa)).

Highly expressed in the central nervous system. Also found in skeletal muscle and at low levels in pancreas.

It localises to the cytoplasm. Co-chaperone which acts as a regulator of the Hsp70 chaperone machinery and may be involved in the processing of other ataxia-linked proteins. The chain is Sacsin (SACS) from Homo sapiens (Human).